The chain runs to 248 residues: Floral homeotic protein AGAMOUS (248 aa).

The MADS-box domain maps to 19 to 73 (RGKIEIKRIENTTNRQVTFCKRRNGLLKKAYELSVLCDAEVALIVFSSRGRLYEY). Residues 103–193 (AQYYQQEASK…RAKIAETERA (91 aa)) enclose the K-box domain. Residues 196 to 219 (QQQQQQMNLMPGSSSYELVPPPHQ) are disordered. The span at 202–211 (MNLMPGSSSY) shows a compositional bias: polar residues.

It localises to the nucleus. Probable transcription factor involved in regulating genes that determines stamen and carpel development in wild-type flowers. This is Floral homeotic protein AGAMOUS (AG1) from Nicotiana tabacum (Common tobacco).